A 176-amino-acid polypeptide reads, in one-letter code: Pro-glucagon (176 aa).

The N-terminal stretch at 1 to 20 (MKSLYFVAGLLVMLAQGSWQ) is a signal peptide. Residues 25 to 35 (NTEEKSSSFPA) show a composition bias toward polar residues. The interval 25-59 (NTEEKSSSFPAPQTDPLGDPDQISEDKRHSQGTFT) is disordered. S54 is modified (phosphoserine). A propeptide spanning residues 84–89 (NKNNIA) is cleaved from the precursor. Phosphoserine is present on residues S105 and S108. R127 is modified (arginine amide). Positions 131–145 (DFPEEVNIVEELRRR) are excised as a propeptide. A phosphoserine mark is found at S150 and S152.

This sequence belongs to the glucagon family. In terms of processing, proglucagon is post-translationally processed in a tissue-specific manner in pancreatic A cells and intestinal L cells. In pancreatic A cells, the major bioactive hormone is glucagon cleaved by PCSK2/PC2. In the intestinal L cells PCSK1/PC1 liberates GLP-1, GLP-2, glicentin and oxyntomodulin. GLP-1 is further N-terminally truncated by post-translational processing in the intestinal L cells resulting in GLP-1(7-37) GLP-1-(7-36)amide. The C-terminal amidation is neither important for the metabolism of GLP-1 nor for its effects on the endocrine pancreas. Glucagon is secreted in the A cells of the islets of Langerhans. GLP-1, GLP-2, oxyntomodulin and glicentin are secreted from enteroendocrine cells throughout the gastrointestinal tract. GLP-1 and GLP-2 are also secreted in selected neurons in the brain.

The protein resides in the secreted. Functionally, plays a key role in glucose metabolism and homeostasis. Regulates blood glucose by increasing gluconeogenesis and decreasing glycolysis. A counterregulatory hormone of insulin, raises plasma glucose levels in response to insulin-induced hypoglycemia. Plays an important role in initiating and maintaining hyperglycemic conditions in diabetes. In terms of biological role, potent stimulator of glucose-dependent insulin release. Also stimulates insulin release in response to IL6. Plays important roles on gastric motility and the suppression of plasma glucagon levels. May be involved in the suppression of satiety and stimulation of glucose disposal in peripheral tissues, independent of the actions of insulin. Has growth-promoting activities on intestinal epithelium. May also regulate the hypothalamic pituitary axis (HPA) via effects on LH, TSH, CRH, oxytocin, and vasopressin secretion. Increases islet mass through stimulation of islet neogenesis and pancreatic beta cell proliferation. Inhibits beta cell apoptosis. Its function is as follows. Stimulates intestinal growth and up-regulates villus height in the small intestine, concomitant with increased crypt cell proliferation and decreased enterocyte apoptosis. The gastrointestinal tract, from the stomach to the colon is the principal target for GLP-2 action. Plays a key role in nutrient homeostasis, enhancing nutrient assimilation through enhanced gastrointestinal function, as well as increasing nutrient disposal. Stimulates intestinal glucose transport and decreases mucosal permeability. Significantly reduces food intake. Inhibits gastric emptying in humans. Suppression of gastric emptying may lead to increased gastric distension, which may contribute to satiety by causing a sensation of fullness. Functionally, may modulate gastric acid secretion and the gastro-pyloro-duodenal activity. May play an important role in intestinal mucosal growth in the early period of life. This Ovis aries (Sheep) protein is Pro-glucagon (GCG).